Reading from the N-terminus, the 486-residue chain is Ribulose bisphosphate carboxylase large chain, plasmid (486 aa).

Residues N126 and T176 each coordinate substrate. The active-site Proton acceptor is the K178. K180 serves as a coordination point for substrate. Mg(2+)-binding residues include K204, D206, and E207. K204 is modified (N6-carboxylysine). H296 (proton acceptor) is an active-site residue. Substrate contacts are provided by R297, H329, and S381.

This sequence belongs to the RuBisCO large chain family. Type I subfamily. As to quaternary structure, heterohexadecamer of 8 large chains and 8 small chains. Mg(2+) serves as cofactor.

The catalysed reaction is 2 (2R)-3-phosphoglycerate + 2 H(+) = D-ribulose 1,5-bisphosphate + CO2 + H2O. It catalyses the reaction D-ribulose 1,5-bisphosphate + O2 = 2-phosphoglycolate + (2R)-3-phosphoglycerate + 2 H(+). Functionally, ruBisCO catalyzes two reactions: the carboxylation of D-ribulose 1,5-bisphosphate, the primary event in carbon dioxide fixation, as well as the oxidative fragmentation of the pentose substrate. Both reactions occur simultaneously and in competition at the same active site. This is Ribulose bisphosphate carboxylase large chain, plasmid (cbbL2) from Cupriavidus necator (strain ATCC 17699 / DSM 428 / KCTC 22496 / NCIMB 10442 / H16 / Stanier 337) (Ralstonia eutropha).